A 197-amino-acid chain; its full sequence is Pyridoxal 5'-phosphate synthase subunit PdxT (197 aa).

Residue 50-52 (GES) coordinates L-glutamine. Cys-82 (nucleophile) is an active-site residue. L-glutamine is bound by residues Arg-111 and 140–141 (IR). Residues His-176 and Glu-178 each act as charge relay system in the active site.

The protein belongs to the glutaminase PdxT/SNO family. In the presence of PdxS, forms a dodecamer of heterodimers. Only shows activity in the heterodimer.

The enzyme catalyses aldehydo-D-ribose 5-phosphate + D-glyceraldehyde 3-phosphate + L-glutamine = pyridoxal 5'-phosphate + L-glutamate + phosphate + 3 H2O + H(+). It catalyses the reaction L-glutamine + H2O = L-glutamate + NH4(+). It functions in the pathway cofactor biosynthesis; pyridoxal 5'-phosphate biosynthesis. Its function is as follows. Catalyzes the hydrolysis of glutamine to glutamate and ammonia as part of the biosynthesis of pyridoxal 5'-phosphate. The resulting ammonia molecule is channeled to the active site of PdxS. The chain is Pyridoxal 5'-phosphate synthase subunit PdxT from Streptomyces griseus subsp. griseus (strain JCM 4626 / CBS 651.72 / NBRC 13350 / KCC S-0626 / ISP 5235).